Reading from the N-terminus, the 803-residue chain is Protein AMEIOTIC 1 homolog (803 aa).

Disordered stretches follow at residues 21 to 64 and 264 to 333; these read RPQV…QSLS and RLRQ…RWSA. A compositionally biased stretch (basic and acidic residues) spans 39–50; the sequence is NGKDDANHDESK. Over residues 51–64 the composition is skewed to polar residues; that stretch reads NQSPGLPLSRQSLS. Over residues 283-295 the composition is skewed to basic and acidic residues; it reads KREEAESSMDKSR. Basic residues predominate over residues 296 to 313; that stretch reads AARKKKAKTYKSPKKVEK. Residues 314 to 333 show a composition bias toward basic and acidic residues; that stretch reads RRVVEAKDGDPRRGKDRWSA. Positions 450 to 567 form a coiled coil; it reads VKKKVEELAE…SSFLSLKEQL (118 aa). The tract at residues 651–688 is disordered; it reads ISGGGSSSCPVASGPEQLPRSSSCPSIGPGGLPPSSRA.

The protein resides in the nucleus. Its subcellular location is the chromosome. Functionally, plays a fundamental role in building the proper chromosome structure at the beginning of meiosis in male meiocytes. Required for the transition from leptotene to zygotene in meiocytes. Required for homologous chromosome pairing. This chain is Protein AMEIOTIC 1 homolog, found in Oryza sativa subsp. japonica (Rice).